The chain runs to 2131 residues: Nonribosomal peptide synthetase criC (2131 aa).

Positions 13-407 are adenylation 1; the sequence is FSQQCFQHPD…GRRDRVTKIR (395 aa). Positions 525–601 constitute a Carrier 1 domain; that stretch reads SGPLTIDQTI…ALVEKNRHET (77 aa). Position 562 is an O-(pantetheine 4'-phosphoryl)serine (S562). The interval 598–627 is disordered; that stretch reads RHETENRPDSSAFATRTPEESSMPTQGPVT. The segment at 625–1018 is condensation 1; the sequence is PVTPLQKRMV…YMSLLDAFLD (394 aa). The segment at 1069-1447 is adenylation 2; sequence ASLHPTHIAV…GRKDRQVKVR (379 aa). The region spanning 1569-1647 is the Carrier 2 domain; the sequence is SSEAHLEKLI…DLITLVAQQQ (79 aa). S1607 is modified (O-(pantetheine 4'-phosphoryl)serine). The tract at residues 1688–2086 is condensation 2; the sequence is SQSQSTFNVP…EALLLECFRM (399 aa).

Belongs to the NRP synthetase family. Pantetheine 4'-phosphate is required as a cofactor.

It catalyses the reaction L-tryptophan + L-alanine + 2 ATP = cyclo(L-tryptophyl-L-alanyl) + 2 ADP + 2 phosphate + 2 H(+). Its pathway is secondary metabolite biosynthesis. The protein operates within alkaloid biosynthesis. Its function is as follows. Nonribosomal peptide synthetase; part of the gene cluster that mediates the biosynthesis of echinulin family alkaloid. The pathway begins with the biosynthesis of the cyclic dipeptide cyclo-L-Trp-L-Ala (cyclo-TA) by the NRPS criC via condensation of L-alanine and L-tryptophan. The prenyltransferase criA then catalyzes the first prenylation step, a reverse prenylation reaction at C2, to yield preechinulin. Preechinulin is the substrate of the cytochrome P450 monooxygenase criE that catalyzes the formation of the double bond between C10 and C11 to produce neoechulin A. The unique prenyltransferase criF functions as a competitive enzyme with criE for preechinulin metabolization and uses preechinulin for effective regiospecific prenylations. Preechinulin is prenylated by criF at C5 or C7. C7-prenylation leads to accumulation of tardioxopiperazine B without further modification by criF. In contrast, the C5-prenylated tardioxopiperazine A can be prenylated again by criF, predominantly at C7 to form echinulin or less frequently at C4 to give variecolorin L. CriF also accepts neoechilunin A to produce varlecolorin G (prenylation at C5) or isoechinulin A (prenylation at C7). CriF further converts isoechinulin A into dehydroechinulin. Moreover, a yet unidentified enzyme can also convert neoechilunin A into neoechilunin B by introducing a double bond between positions C14 and C17 and thus provides a further substrate to criF for C5 and C7 prenylation. The chain is Nonribosomal peptide synthetase criC from Aspergillus cristatus (Chinese Fuzhuan brick tea-fermentation fungus).